A 188-amino-acid chain; its full sequence is Acireductone dioxygenase (188 aa).

Fe(2+) is bound by residues His-97, His-99, Glu-103, and His-141. Ni(2+) contacts are provided by His-97, His-99, Glu-103, and His-141.

This sequence belongs to the acireductone dioxygenase (ARD) family. As to quaternary structure, monomer. It depends on Fe(2+) as a cofactor. Requires Ni(2+) as cofactor.

It carries out the reaction 1,2-dihydroxy-5-(methylsulfanyl)pent-1-en-3-one + O2 = 3-(methylsulfanyl)propanoate + CO + formate + 2 H(+). The enzyme catalyses 1,2-dihydroxy-5-(methylsulfanyl)pent-1-en-3-one + O2 = 4-methylsulfanyl-2-oxobutanoate + formate + 2 H(+). Its pathway is amino-acid biosynthesis; L-methionine biosynthesis via salvage pathway; L-methionine from S-methyl-5-thio-alpha-D-ribose 1-phosphate: step 5/6. In terms of biological role, catalyzes 2 different reactions between oxygen and the acireductone 1,2-dihydroxy-3-keto-5-methylthiopentene (DHK-MTPene) depending upon the metal bound in the active site. Fe-containing acireductone dioxygenase (Fe-ARD) produces formate and 2-keto-4-methylthiobutyrate (KMTB), the alpha-ketoacid precursor of methionine in the methionine recycle pathway. Ni-containing acireductone dioxygenase (Ni-ARD) produces methylthiopropionate, carbon monoxide and formate, and does not lie on the methionine recycle pathway. The polypeptide is Acireductone dioxygenase (Xylella fastidiosa (strain M23)).